A 474-amino-acid chain; its full sequence is Gamma-aminobutyric acid receptor subunit beta-1 (474 aa).

The first 25 residues, 1 to 25 (MWTVQNRESLGLLSFPVMIAMVCCA), serve as a signal peptide directing secretion. Topologically, residues 26-245 (HSANEPSNMS…SFRLKRNIGY (220 aa)) are extracellular. Asn33 and Asn105 each carry an N-linked (GlcNAc...) asparagine glycan. Tyr122 serves as a coordination point for histamine. Cys161 and Cys175 form a disulfide bridge. Asn174 is a glycosylation site (N-linked (GlcNAc...) asparagine). Histamine is bound by residues 181–182 (SY) and Thr227. Residues Tyr182 and Thr227 each contribute to the 4-aminobutanoate site. Transmembrane regions (helical) follow at residues 246 to 267 (FILQTYMPSTLITILSWVSFWI), 271 to 293 (ASAARVALGITTVLTMTTISTHL), and 305 to 327 (AIDIYLMGCFVFVFLALLEYAFV). Topologically, residues 328-451 (NYIFFGKGPQ…DLTDVNSIDK (124 aa)) are cytoplasmic. The chain crosses the membrane as a helical span at residues 452–473 (WSRMFFPITFSLFNVVYWLYYV).

It belongs to the ligand-gated ion channel (TC 1.A.9) family. Gamma-aminobutyric acid receptor (TC 1.A.9.5) subfamily. GABRB1 sub-subfamily. As to quaternary structure, heteropentamer, formed by a combination of alpha (GABRA1-6), beta (GABRB1-3), gamma (GABRG1-3), delta (GABRD), epsilon (GABRE), rho (GABRR1-3), pi (GABRP) and theta (GABRQ) chains, each subunit exhibiting distinct physiological and pharmacological properties. Binds UBQLN1.

It localises to the postsynaptic cell membrane. The protein localises to the cell membrane. The catalysed reaction is chloride(in) = chloride(out). Its activity is regulated as follows. Potentiated by histamine. Beta subunit of the heteropentameric ligand-gated chloride channel gated by gamma-aminobutyric acid (GABA), a major inhibitory neurotransmitter in the brain. GABA-gated chloride channels, also named GABA(A) receptors (GABAAR), consist of five subunits arranged around a central pore and contain GABA active binding site(s) located at the alpha and beta subunit interface(s). When activated by GABA, GABAARs selectively allow the flow of chloride anions across the cell membrane down their electrochemical gradient. Chloride influx into the postsynaptic neuron following GABAAR opening decreases the neuron ability to generate a new action potential, thereby reducing nerve transmission. Beta-containing GABAARs can simultaneously bind GABA and histamine where histamine binds at the interface of two neighboring beta subunits, which may be involved in the regulation of sleep and wakefulness. The sequence is that of Gamma-aminobutyric acid receptor subunit beta-1 (GABRB1) from Bos taurus (Bovine).